The primary structure comprises 1273 residues: Kinesin-like protein KIN-7O (1273 aa).

Residues 3–327 (RIHVSVRARP…LQFASRALRV (325 aa)) enclose the Kinesin motor domain. Residue 79–86 (GQTNSGKT) coordinates ATP. Residues 333–408 (VNEILTDAAL…QRERVLQEQA (76 aa)) are a coiled coil. The tract at residues 452–474 (SEDQSNVLSRGSSLESARSERET) is disordered. Positions 453 to 467 (EDQSNVLSRGSSLES) are enriched in polar residues. 2 coiled-coil regions span residues 602 to 674 (EAIL…ESEV) and 751 to 1023 (VQSS…MEEE).

Belongs to the TRAFAC class myosin-kinesin ATPase superfamily. Kinesin family. KIN-7 subfamily.

The chain is Kinesin-like protein KIN-7O from Arabidopsis thaliana (Mouse-ear cress).